The sequence spans 571 residues: MAAYGQISSGMTVDPQVLSSSRNIGVSLSPLRRTLIGAGVRSTSISLRQCSLSVRSIKISEDSRKPKAYAENGAFDVGVLDSSSYRLADSRTSSNDSRRKTKIVCTIGPSSSSREMIWKLAEAGMNVARLNMSHGDHASHQITIDLVKEYNSLFVDKAIAIMLDTKGPEVRSGDVPQPIFLEEGQEFNFTIKRGVSLKDTVSVNYDDFVNDVEVGDILLVDGGMMSLAVKSKTSDLVKCVVIDGGELQSRRHLNVRGKSATLPSITDKDWEDIKFGVDNQVDFYAVSFVKDAKVVHELKNYLKTCSADISVIVKIESADSIKNLPSIISACDGAMVARGDLGAELPIEEVPLLQEEIIRRCRSIHKPVIVATNMLESMINHPTPTRAEVSDIAIAVREGADAIMLSGETAHGKFPLKAVNVMHTVALRTEASLPVRTSASRTTAYKGHMGQMFAFHASIMANTLSSPLIVFTRTGSMAVLLSHYRPSATIFAFTNQRRIMQRLALYQGVMPIYMEFSDDAEDTYARSLKLLQDENMLKEGQHVTLVQSGSQPIWREESTHLIQVRKIKIGG.

A chloroplast-targeting transit peptide spans 1–55; the sequence is MAAYGQISSGMTVDPQVLSSSRNIGVSLSPLRRTLIGAGVRSTSISLRQCSLSVR. Position 129 (Arg-129) interacts with substrate. Positions 131, 133, 164, and 165 each coordinate K(+). Residue 131–134 coordinates ATP; that stretch reads NMSH. Arg-171 serves as a coordination point for ATP. Lys-314 is a binding site for substrate. Residue Glu-316 participates in Mg(2+) binding. 3 residues coordinate substrate: Gly-339, Asp-340, and Thr-372. Asp-340 contacts Mg(2+).

It belongs to the pyruvate kinase family. In terms of assembly, oligomer of alpha and beta subunits. Requires Mg(2+) as cofactor. It depends on K(+) as a cofactor. As to expression, expressed at low levels in roots, leaves, inflorescences, siliques, pollen, seeds and flowers.

The protein localises to the plastid. It localises to the chloroplast stroma. The catalysed reaction is pyruvate + ATP = phosphoenolpyruvate + ADP + H(+). It functions in the pathway carbohydrate degradation; glycolysis; pyruvate from D-glyceraldehyde 3-phosphate: step 5/5. Required for plastidial pyruvate kinase activity. This chain is Plastidial pyruvate kinase 3, chloroplastic (PKP3), found in Arabidopsis thaliana (Mouse-ear cress).